The chain runs to 175 residues: uncharacterized protein (175 aa).

The span at 35-56 (LIENSNYDNNNINNNNNNNNTD) shows a compositional bias: low complexity. The tract at residues 35 to 70 (LIENSNYDNNNINNNNNNNNTDNDNDNNNDNEPFYN) is disordered. Helical transmembrane passes span 106–126 (ILSFSIKSFLLLILYILFFNY) and 132–152 (YFIILLSLNLIITLISIKSIF).

The protein localises to the membrane. This is an uncharacterized protein from Dictyostelium discoideum (Social amoeba).